The chain runs to 174 residues: Solute carrier family 2, facilitated glucose transporter member 4 (174 aa).

Residues 1–19 (QQIGSEDGEPPQQRVTGTL) lie on the Cytoplasmic side of the membrane. Residues 2–8 (QIGSEDG) form an interaction with SRFBP1 region. Position 5 is a phosphoserine (Ser5). A helical membrane pass occupies residues 20–40 (VLAVFSAVLGSLQFGYNIGVI). Topologically, residues 41 to 76 (NAPQKVIEQSYNETWLGRQGPNGPGSIPPGTLTTLW) are extracellular. Residue Asn52 is glycosylated (N-linked (GlcNAc...) asparagine). Residues 77–97 (ALSVAIFSVGGMFSSFLLGII) form a helical membrane-spanning segment. Over 98 to 114 (SQWLGRKKAMLFNNTLA) the chain is Cytoplasmic. Residues 115–135 (VLAGALMGLAKAAASYEMLIL) form a helical membrane-spanning segment. Residues 136–137 (GR) are Extracellular-facing. Residues 138–158 (FLIGAYSGLASGLVPMYVGEI) form a helical membrane-spanning segment. Residues 159-166 (APTHLRGA) are Cytoplasmic-facing. Residues 167 to 174 (LGTLNQLA) traverse the membrane as a helical segment.

This sequence belongs to the major facilitator superfamily. Sugar transporter (TC 2.A.1.1) family. Glucose transporter subfamily. As to quaternary structure, binds to DAXX. Interacts via its N-terminus with SRFBP1. Interacts with NDUFA9. Interacts with TRARG1; the interaction is required for proper SLC2A4 recycling after insulin stimulation. Post-translationally, sumoylated. In terms of processing, palmitoylated. Palmitoylation by ZDHHC7 controls the insulin-dependent translocation of GLUT4 to the plasma membrane.

Its subcellular location is the cell membrane. The protein localises to the endomembrane system. It is found in the cytoplasm. It localises to the perinuclear region. It carries out the reaction D-glucose(out) = D-glucose(in). In terms of biological role, insulin-regulated facilitative glucose transporter, which plays a key role in removal of glucose from circulation. Response to insulin is regulated by its intracellular localization: in the absence of insulin, it is efficiently retained intracellularly within storage compartments in muscle and fat cells. Upon insulin stimulation, translocates from these compartments to the cell surface where it transports glucose from the extracellular milieu into the cell. This is Solute carrier family 2, facilitated glucose transporter member 4 from Sus scrofa (Pig).